Consider the following 968-residue polypeptide: MSLYQRYLSKSLIFIFSLFFLILFFLESSIGFKYFFNFTNYFFIGLKTEEISGNWRDFKLKKINFNIFGTSIKAESVHIITDPISLFKVSTILKKIKTKNLVISFNKKIKKVALKNNFLKEKKIKNTIFFKHSLILRKIYSDKILLKTQKKNIFLFGVFSGLQLSNDTCTFLPTKINSIYIDSSMRNVKNIDNKKSNFFIKKDIFYRNKIDNALSFFSIFKNFFIPININLINLKCNQLKFFNRTFLDIYKIKMSAQLKKNILKIKKIQIYSKYFKTKSKGKIFFRSDFSIFFIVKNEMSINIINNKAMNLLFKDTIDHKLNFKSNNLIKFNIHGEISLDDLNYPIHINLHLNRLFLPISKNLILSSKNFNFSLKGKINNYFLSLKNIINISGMPSFFISISAIGNIQNVVIKKIHFFPFFKEIKTKKFIKIKKEIDYNKYITQLAGKMRILSDFNKQSSNIFLPYFHVYGDFMRKKISVLGSLYYRKLNGITIPRINFLLGKNKGHISGSISKKVNLRSSIYANNLNYFSPNLKGIIKATLNIYSFCSLPSFSSVILGQKINWKNILYFNNIKITTNGNLKKSFPNKFFADFKNIRFSKFHINSLHIKSDWNNINQKFSLSLKDKKLSITFILNGHLNRKVGIWKGVLKKIDVKTSWGQWISRNNPLIFYHIKNSINFKNIKKIKNKNAFYSAINNIQTSLFKLIRQSPVKFQTDLFFNTQFQWKLRENITNLKLFLKGSNINLEKKIKEKIMFEKISAVNLYINFKKNNFITKWIIKKSKNSLKVNKISGFLNIYDFFHEKKIEGKVFLSDFSCSFLNFFENFFTKIQGKFSGNINFLGTIYQPQISADINFQDFYIKSDKIFKYMLLFFCSFPNKIENIKINQEIIMKKGNALFKLNSVVKNNISHIKWNILFHSNKLAIVLFPKIKLNFSSQLNLYYFLSKYDLIGYLKFSFFSFKINEKNFLF.

The helical transmembrane segment at 12-32 (LIFIFSLFFLILFFLESSIGF) threads the bilayer.

It to E.coli YtfN.

It is found in the membrane. This is an uncharacterized protein from Buchnera aphidicola subsp. Schizaphis graminum (strain Sg).